The sequence spans 178 residues: Nicotinamide-nucleotide adenylyltransferase (178 aa).

It belongs to the archaeal NMN adenylyltransferase family.

The protein resides in the cytoplasm. The enzyme catalyses beta-nicotinamide D-ribonucleotide + ATP + H(+) = diphosphate + NAD(+). It participates in cofactor biosynthesis; NAD(+) biosynthesis; NAD(+) from nicotinamide D-ribonucleotide: step 1/1. This Thermoplasma volcanium (strain ATCC 51530 / DSM 4299 / JCM 9571 / NBRC 15438 / GSS1) protein is Nicotinamide-nucleotide adenylyltransferase.